The primary structure comprises 620 residues: 1-deoxy-D-xylulose-5-phosphate synthase (620 aa).

Thiamine diphosphate contacts are provided by residues H80 and 121–123 (GHS). Position 152 (D152) interacts with Mg(2+). Residues 153 to 154 (GA), N181, Y288, and E370 contribute to the thiamine diphosphate site. Residue N181 participates in Mg(2+) binding.

The protein belongs to the transketolase family. DXPS subfamily. In terms of assembly, homodimer. It depends on Mg(2+) as a cofactor. Requires thiamine diphosphate as cofactor.

It catalyses the reaction D-glyceraldehyde 3-phosphate + pyruvate + H(+) = 1-deoxy-D-xylulose 5-phosphate + CO2. The protein operates within metabolic intermediate biosynthesis; 1-deoxy-D-xylulose 5-phosphate biosynthesis; 1-deoxy-D-xylulose 5-phosphate from D-glyceraldehyde 3-phosphate and pyruvate: step 1/1. Functionally, catalyzes the acyloin condensation reaction between C atoms 2 and 3 of pyruvate and glyceraldehyde 3-phosphate to yield 1-deoxy-D-xylulose-5-phosphate (DXP). The sequence is that of 1-deoxy-D-xylulose-5-phosphate synthase from Salmonella agona (strain SL483).